We begin with the raw amino-acid sequence, 38 residues long: MKVYSSIKKRCEHCRIIKRKGKRYVICKVNPSHKQRQG.

It belongs to the bacterial ribosomal protein bL36 family.

The protein is Large ribosomal subunit protein bL36 of Chlorobaculum parvum (strain DSM 263 / NCIMB 8327) (Chlorobium vibrioforme subsp. thiosulfatophilum).